The primary structure comprises 435 residues: MEERSVLMERYVIGRQLGQGTFGKVYYARNLSSGQSVAIKMIDKEKILKVGLMEQIKREISIMRLVRHPNVLQLFEVMATKSNIYFALEYAKGGELFHKMARAKLNEESARNYFQQLISAMDYCHSRGVYHRDLKPENLLLDENETLKVSDFGLSALAESRRQDGLLHTACGTPAYVAPEVLSRKGYSGSKADVWSCGVILFVLVANYLPFHDRNIIQMYRKIAKAEYRCPRHFSAELKELLYGILDPDPSTRMSISRIKRSAWYRKPIAISALNNETGKKSCTSEAPFSGPTICISSERNQEPPNLHNLNAFDIISLSTGFDLSGLFGERYGRRESLFTSRKPAAAVLVKLKELAKALNLKVTKTDNGVLKLATTKEGRKGRLELDAEVSEVAPFLLVELKKTNGDTLEYQRMMKEDIRPSLKDIIWTWQGDQQ.

The region spanning 11 to 265 (YVIGRQLGQG…ISRIKRSAWY (255 aa)) is the Protein kinase domain. ATP contacts are provided by residues 17–25 (LGQGTFGKV) and Lys40. Asp133 acts as the Proton acceptor in catalysis. Residues 151-180 (DFGLSALAESRRQDGLLHTACGTPAYVAPE) form an activation loop region. The NAF domain maps to 283-329 (CTSEAPFSGPTICISSERNQEPPNLHNLNAFDIISLSTGFDLSGLFG). Positions 334 to 363 (RRESLFTSRKPAAAVLVKLKELAKALNLKV) are PPI.

This sequence belongs to the protein kinase superfamily. CAMK Ser/Thr protein kinase family. SNF1 subfamily. Mn(2+) serves as cofactor.

It catalyses the reaction L-seryl-[protein] + ATP = O-phospho-L-seryl-[protein] + ADP + H(+). The catalysed reaction is L-threonyl-[protein] + ATP = O-phospho-L-threonyl-[protein] + ADP + H(+). CIPK serine-threonine protein kinases interact with CBL proteins. Binding of a CBL protein to the regulatory NAF domain of CIPK protein lead to the activation of the kinase in a calcium-dependent manner. The sequence is that of CBL-interacting protein kinase 28 (CIPK28) from Oryza sativa subsp. japonica (Rice).